The chain runs to 476 residues: Cysteine--tRNA ligase (476 aa).

Zn(2+) is bound at residue Cys-29. A 'HIGH' region motif is present at residues 31-41 (PTVYDYPHLGH). Residues Cys-209, His-234, and Glu-238 each contribute to the Zn(2+) site. The 'KMSKS' region signature appears at 266-270 (KMSKS). ATP is bound at residue Lys-269.

Belongs to the class-I aminoacyl-tRNA synthetase family. Requires Zn(2+) as cofactor.

The protein resides in the cytoplasm. It catalyses the reaction tRNA(Cys) + L-cysteine + ATP = L-cysteinyl-tRNA(Cys) + AMP + diphosphate. This Thermococcus gammatolerans (strain DSM 15229 / JCM 11827 / EJ3) protein is Cysteine--tRNA ligase.